The sequence spans 545 residues: Glutamine-dependent NAD(+) synthetase (545 aa).

The 243-residue stretch at leucine 5–arginine 247 folds into the CN hydrolase domain. Catalysis depends on glutamate 46, which acts as the Proton acceptor; for glutaminase activity. The active-site For glutaminase activity is the lysine 113. Residue tyrosine 119 coordinates L-glutamine. The Nucleophile; for glutaminase activity role is filled by cysteine 151. 2 residues coordinate L-glutamine: serine 177 and lysine 183. The segment at valine 269–glycine 545 is ligase. Position 292 to 299 (glycine 292 to serine 299) interacts with ATP. Asparagine 375 contacts deamido-NAD(+). ATP is bound at residue threonine 399. 2 residues coordinate deamido-NAD(+): glutamate 404 and lysine 516.

This sequence in the C-terminal section; belongs to the NAD synthetase family.

It carries out the reaction deamido-NAD(+) + L-glutamine + ATP + H2O = L-glutamate + AMP + diphosphate + NAD(+) + H(+). Its pathway is cofactor biosynthesis; NAD(+) biosynthesis; NAD(+) from deamido-NAD(+) (L-Gln route): step 1/1. Its function is as follows. Catalyzes the ATP-dependent amidation of deamido-NAD to form NAD. Uses L-glutamine as a nitrogen source. The sequence is that of Glutamine-dependent NAD(+) synthetase from Xylella fastidiosa (strain 9a5c).